Reading from the N-terminus, the 71-residue chain is Small ribosomal subunit protein bS21 (71 aa).

Residues 48–59 show a composition bias toward basic residues; that stretch reads AKASAVKRHAKK. The disordered stretch occupies residues 48–71; the sequence is AKASAVKRHAKKLSRENARRIRLY. A compositionally biased stretch (basic and acidic residues) spans 60-71; it reads LSRENARRIRLY.

The protein belongs to the bacterial ribosomal protein bS21 family.

This Aeromonas hydrophila subsp. hydrophila (strain ATCC 7966 / DSM 30187 / BCRC 13018 / CCUG 14551 / JCM 1027 / KCTC 2358 / NCIMB 9240 / NCTC 8049) protein is Small ribosomal subunit protein bS21.